The chain runs to 193 residues: Cytochrome c biogenesis ATP-binding export protein CcmA (193 aa).

The region spanning 9–191 (LSASGLAILR…AAGFPVTAEV (183 aa)) is the ABC transporter domain. 41-48 (GANGAGKT) contributes to the ATP binding site.

Belongs to the ABC transporter superfamily. CcmA exporter (TC 3.A.1.107) family. As to quaternary structure, the complex is composed of two ATP-binding proteins (CcmA) and two transmembrane proteins (CcmB).

It localises to the cell inner membrane. It catalyses the reaction heme b(in) + ATP + H2O = heme b(out) + ADP + phosphate + H(+). Part of the ABC transporter complex CcmAB involved in the biogenesis of c-type cytochromes; once thought to export heme, this seems not to be the case, but its exact role is uncertain. Responsible for energy coupling to the transport system. The chain is Cytochrome c biogenesis ATP-binding export protein CcmA from Hyphomonas neptunium (strain ATCC 15444).